Consider the following 351-residue polypeptide: Transcription factor bHLH93 (351 aa).

The bHLH domain occupies 174–223 (GQPSKNLMAERRRRKRLNDRLSMLRSIVPKISKMDRTSILGDAIDYMKEL).

Homodimer. Interacts with FAMA. In terms of tissue distribution, broadly expressed.

The protein localises to the nucleus. Functionally, transcription factor. May be involved in the differentiation of stomatal guard cells. The polypeptide is Transcription factor bHLH93 (BHLH93) (Arabidopsis thaliana (Mouse-ear cress)).